We begin with the raw amino-acid sequence, 165 residues long: 2-C-methyl-D-erythritol 2,4-cyclodiphosphate synthase (165 aa).

D8 and H10 together coordinate a divalent metal cation. Residues D8 to H10 and H34 to S35 each bind 4-CDP-2-C-methyl-D-erythritol 2-phosphate. Position 42 (H42) interacts with a divalent metal cation. 4-CDP-2-C-methyl-D-erythritol 2-phosphate-binding positions include D56–G58, F61–D65, T132–E135, F139, and R142.

It belongs to the IspF family. As to quaternary structure, homotrimer. Requires a divalent metal cation as cofactor.

It carries out the reaction 4-CDP-2-C-methyl-D-erythritol 2-phosphate = 2-C-methyl-D-erythritol 2,4-cyclic diphosphate + CMP. It functions in the pathway isoprenoid biosynthesis; isopentenyl diphosphate biosynthesis via DXP pathway; isopentenyl diphosphate from 1-deoxy-D-xylulose 5-phosphate: step 4/6. Its function is as follows. Involved in the biosynthesis of isopentenyl diphosphate (IPP) and dimethylallyl diphosphate (DMAPP), two major building blocks of isoprenoid compounds. Catalyzes the conversion of 4-diphosphocytidyl-2-C-methyl-D-erythritol 2-phosphate (CDP-ME2P) to 2-C-methyl-D-erythritol 2,4-cyclodiphosphate (ME-CPP) with a corresponding release of cytidine 5-monophosphate (CMP). In Halothermothrix orenii (strain H 168 / OCM 544 / DSM 9562), this protein is 2-C-methyl-D-erythritol 2,4-cyclodiphosphate synthase.